The chain runs to 120 residues: uncharacterized protein (120 aa).

Residues 22–44 (ITVASCIGAAQGALFSIASALLL) form a helical membrane-spanning segment. A glycan (N-linked (GlcNAc...) asparagine) is linked at Asn114.

It is found in the membrane. This is an uncharacterized protein from Saccharomyces cerevisiae (strain ATCC 204508 / S288c) (Baker's yeast).